Consider the following 359-residue polypeptide: Mitochondrial calcium uniporter regulator 1 (359 aa).

Residues 1 to 68 (MDCGSVGGQR…ARGGVSRASP (68 aa)) lie on the Mitochondrial intermembrane side of the membrane. A helical transmembrane segment spans residues 69 to 85 (LLLLLLVPSPRLAAAAP). Topologically, residues 86-338 (RRQLGDWERS…LESHKLDNIK (253 aa)) are mitochondrial matrix. Positions 235–310 (EKSEFSALRA…VALHAQQDRA (76 aa)) form a coiled coil. A helical transmembrane segment spans residues 339-358 (YLAGSIFTCLTVALGFYRLW). Residue I359 is a topological domain, mitochondrial intermembrane.

The protein belongs to the CCDC90 family. In terms of assembly, interacts (via coiled coil regions) with MCU; the interaction is direct. Interacts with SMDT1/EMRE; the interaction is direct. Interacts with PPIF. In terms of tissue distribution, ubiquitously expressed.

Its subcellular location is the mitochondrion inner membrane. In terms of biological role, key regulator of mitochondrial calcium uniporter (MCU) required for calcium entry into mitochondrion. Plays a direct role in uniporter-mediated calcium uptake via a direct interaction with MCU. Probably involved in the assembly of the membrane components of the uniporter complex (uniplex). The chain is Mitochondrial calcium uniporter regulator 1 from Homo sapiens (Human).